Consider the following 535-residue polypeptide: CTP synthase (535 aa).

The tract at residues 1 to 267 (MTKYIFVTGG…DQIVCDHLKL (267 aa)) is amidoligase domain. Serine 13 serves as a coordination point for CTP. UTP is bound at residue serine 13. Residue 14–19 (SLGKGI) participates in ATP binding. Residue tyrosine 54 participates in L-glutamine binding. Aspartate 71 provides a ligand contact to ATP. Mg(2+) contacts are provided by aspartate 71 and glutamate 141. Residues 148-150 (DIE), 188-193 (KTKPTQ), and lysine 224 contribute to the CTP site. UTP-binding positions include 188 to 193 (KTKPTQ) and lysine 224. 240–242 (RDA) provides a ligand contact to ATP. A Glutamine amidotransferase type-1 domain is found at 292-534 (KIALVGKYVE…VRASITNKES (243 aa)). Residue glycine 354 participates in L-glutamine binding. Residue cysteine 381 is the Nucleophile; for glutamine hydrolysis of the active site. L-glutamine contacts are provided by residues 382-385 (LGMQ), glutamate 405, and arginine 462. Active-site residues include histidine 507 and glutamate 509.

Belongs to the CTP synthase family. In terms of assembly, homotetramer.

It catalyses the reaction UTP + L-glutamine + ATP + H2O = CTP + L-glutamate + ADP + phosphate + 2 H(+). It carries out the reaction L-glutamine + H2O = L-glutamate + NH4(+). The enzyme catalyses UTP + NH4(+) + ATP = CTP + ADP + phosphate + 2 H(+). Its pathway is pyrimidine metabolism; CTP biosynthesis via de novo pathway; CTP from UDP: step 2/2. Allosterically activated by GTP, when glutamine is the substrate; GTP has no effect on the reaction when ammonia is the substrate. The allosteric effector GTP functions by stabilizing the protein conformation that binds the tetrahedral intermediate(s) formed during glutamine hydrolysis. Inhibited by the product CTP, via allosteric rather than competitive inhibition. In terms of biological role, catalyzes the ATP-dependent amination of UTP to CTP with either L-glutamine or ammonia as the source of nitrogen. Regulates intracellular CTP levels through interactions with the four ribonucleotide triphosphates. This chain is CTP synthase, found in Bacillus cereus (strain ATCC 10987 / NRS 248).